The sequence spans 148 residues: Nucleoside diphosphate kinase (148 aa).

Positions 9, 57, 85, 91, 102, and 112 each coordinate ATP. The residue at position 91 (Thr91) is a Phosphothreonine. The active-site Pros-phosphohistidine intermediate is His115. Ser122 is subject to Phosphoserine.

The protein belongs to the NDK family. As to quaternary structure, homotetramer. The cofactor is Mg(2+).

The protein resides in the cytoplasm. It carries out the reaction a 2'-deoxyribonucleoside 5'-diphosphate + ATP = a 2'-deoxyribonucleoside 5'-triphosphate + ADP. The enzyme catalyses a ribonucleoside 5'-diphosphate + ATP = a ribonucleoside 5'-triphosphate + ADP. Major role in the synthesis of nucleoside triphosphates other than ATP. The ATP gamma phosphate is transferred to the NDP beta phosphate via a ping-pong mechanism, using a phosphorylated active-site intermediate. The protein is Nucleoside diphosphate kinase of Bacillus cereus (strain ATCC 14579 / DSM 31 / CCUG 7414 / JCM 2152 / NBRC 15305 / NCIMB 9373 / NCTC 2599 / NRRL B-3711).